The following is a 291-amino-acid chain: 3-hydroxy-5-phosphonooxypentane-2,4-dione thiolase (291 aa).

Lys203 serves as the catalytic Schiff-base intermediate with substrate.

This sequence belongs to the DeoC/FbaB aldolase family. Homodecamer.

It localises to the cytoplasm. It catalyses the reaction dihydroxyacetone phosphate + acetyl-CoA = 3-hydroxy-2,4-dioxopentyl phosphate + CoA. Involved in the degradation of phospho-AI-2, thereby terminating induction of the lsr operon and closing the AI-2 signaling cycle. Catalyzes the transfer of an acetyl moiety from 3-hydroxy-5-phosphonooxypentane-2,4-dione to CoA to form glycerone phosphate and acetyl-CoA. This is 3-hydroxy-5-phosphonooxypentane-2,4-dione thiolase from Yersinia pseudotuberculosis serotype O:1b (strain IP 31758).